Consider the following 234-residue polypeptide: Enolase-phosphatase E1 (234 aa).

Mg(2+) is bound by residues Asp10 and Glu12. Substrate contacts are provided by residues 125-126 (SS) and Lys162. Residue Asp188 participates in Mg(2+) binding.

The protein belongs to the HAD-like hydrolase superfamily. MasA/MtnC family. In terms of assembly, monomer. The cofactor is Mg(2+).

It localises to the cytoplasm. It is found in the nucleus. It catalyses the reaction 5-methylsulfanyl-2,3-dioxopentyl phosphate + H2O = 1,2-dihydroxy-5-(methylsulfanyl)pent-1-en-3-one + phosphate. It participates in amino-acid biosynthesis; L-methionine biosynthesis via salvage pathway; L-methionine from S-methyl-5-thio-alpha-D-ribose 1-phosphate: step 3/6. The protein operates within amino-acid biosynthesis; L-methionine biosynthesis via salvage pathway; L-methionine from S-methyl-5-thio-alpha-D-ribose 1-phosphate: step 4/6. Its function is as follows. Bifunctional enzyme that catalyzes the enolization of 2,3-diketo-5-methylthiopentyl-1-phosphate (DK-MTP-1-P) into the intermediate 2-hydroxy-3-keto-5-methylthiopentenyl-1-phosphate (HK-MTPenyl-1-P), which is then dephosphorylated to form the acireductone 1,2-dihydroxy-3-keto-5-methylthiopentene (DHK-MTPene). The protein is Enolase-phosphatase E1 (utr4) of Neurospora crassa (strain ATCC 24698 / 74-OR23-1A / CBS 708.71 / DSM 1257 / FGSC 987).